Consider the following 403-residue polypeptide: Rhomboid-like protein 15 (403 aa).

Helical transmembrane passes span 22–42, 70–90, 103–123, 141–161, and 176–196; these read IPFL…ICLL, AIIF…LVPM, LLYL…LIAS, AIGF…LSGV, and LYPW…SLLG. The active-site Nucleophile is serine 145. Catalysis depends on histidine 197, which acts as the Charge relay system. A helical transmembrane segment spans residues 198–218; sequence LCGILSGFSYSYGLFNFLMPG. The tract at residues 282-316 is disordered; the sequence is EASNQSSEDSRFPGRGRTLSTARDPTAPAGETDPN. Positions 361–401 constitute a UBA domain; sequence AASEEQIQKLVAMGFDRTQVEVALAAADDDLTVAVEILMSQ.

This sequence belongs to the peptidase S54 family.

Its subcellular location is the membrane. Its function is as follows. Probable rhomboid-type serine protease that catalyzes intramembrane proteolysis. May function in senescence. The sequence is that of Rhomboid-like protein 15 from Arabidopsis thaliana (Mouse-ear cress).